An 896-amino-acid polypeptide reads, in one-letter code: MDLNFSATSVSRARWSSAYASDPTVWEQLFETKWSVVSNILERKLSDPEHKVVYDELMSLLENMTNMCTLLMLEANSQPEPIIGPILDKFFTEQILERVLDWSIQLTDSLKSICQLAIIRIFEMIVSDSHSQNHCLLVHKPILNPLFRLCEWFQRADIYWRVSKSENKKTSEAEKMFVLLLNQICTKLVEDRTLLHFFFHSNQFVVFTELIPFLYSAGDTGQLARDAVLLILSVSAEDKSIAEYVTERTSFCQVLTTGLSACFSQLPRIILGDGGERLVEDEYRDFLADYHSALLFCNAIAQTAHSEVVGNIASFFYTGFLTNVIKPAFLQNDREYIGASMVYLQMCLETIVEPVLVRSIVQMILTERDDNGTLFYEIVISYVKGGDKTSVTSLSLIDSFLKLACEDVMLALVFRPLLTNHSATKKQLSVVYKASRGGELSQTYLNCIPICMLEYREAASHALLSSYMYSTRIRMDARSEQCRSWKWKYDGVVAGSFVLPAESDDDATFNVSFSRMSSSRSSTSMTPYVSNRYSNGSHLSHVFNINKVCPLGQPQEQNADLSLSELDDDLEEDKDFILPSIDMEDVSEEMTASKVMTQSTIDYMHISGLDGSESDDALPIRIEDSERSETDSEAPKSNFVLSGWRDVKDMGTFKQLLSKQEVKGEKLDSSEIVDFINQKYDSLKLGEEKKEDIEEEESENETKGKEIKSRIVTDGFSIYNFPERSKLLQTILEGVETLCENELPFNTELFSLIADLATYPQPLLAYYLFDPKEDSSEKHLLTILQGVQTRIDVMAEGIESFEIWIERGFETLKARACRIKQQSTASSPRTSDDHDPTLFYGRSTMAPPGRKPLLREPSRQETLDDQTARRTALAAILLAHLCQMLASIVLQQSLII.

The segment at 823–865 (STASSPRTSDDHDPTLFYGRSTMAPPGRKPLLREPSRQETLDD) is disordered. The segment covering 853-865 (LLREPSRQETLDD) has biased composition (basic and acidic residues).

The protein belongs to the FHIP family.

The chain is FHIP family protein C05D11.8 from Caenorhabditis elegans.